Consider the following 548-residue polypeptide: Serine/threonine-protein phosphatase 2A 56 kDa regulatory subunit delta 1 isoform (548 aa).

A compositionally biased stretch (basic residues) spans 1 to 10; it reads MKGIKSKMLS. The tract at residues 1 to 75 is disordered; it reads MKGIKSKMLS…KKVPIDTTPT (75 aa). The segment covering 27–39 has biased composition (basic and acidic residues); sequence KKSNSHDSSKAPK. A Phosphotyrosine modification is found at Tyr96. Phosphoserine occurs at positions 99, 109, and 542.

Belongs to the phosphatase 2A regulatory subunit B family. In terms of assembly, PP2A consists of a common heterodimeric core enzyme, composed of a 36 kDa catalytic subunit (subunit C) and a 65 kDa constant regulatory subunit (PR65 or subunit A), that associates with a variety of regulatory subunits. Proteins that associate with the core dimer include three families of regulatory subunits B (the R2/B/PR55/B55, R3/B''/PR72/PR130/PR59 and R5/B'/B56 families), the 48 kDa variable regulatory subunit, viral proteins, and cell signaling molecules.

The protein resides in the cytoplasm. The protein localises to the nucleus. Its function is as follows. The B regulatory subunit might modulate substrate selectivity and catalytic activity, and might also direct the localization of the catalytic enzyme to a particular subcellular compartment. Has a role in cell shape control and septum formation. This chain is Serine/threonine-protein phosphatase 2A 56 kDa regulatory subunit delta 1 isoform (par1), found in Schizosaccharomyces pombe (strain 972 / ATCC 24843) (Fission yeast).